The primary structure comprises 242 residues: Probable transcriptional regulatory protein EF_0663 (242 aa).

Residues 1 to 14 (MSGHSKWSNIQGRK) show a composition bias toward polar residues. Residues 1 to 22 (MSGHSKWSNIQGRKNAQDAKRG) form a disordered region.

Belongs to the TACO1 family.

Its subcellular location is the cytoplasm. This is Probable transcriptional regulatory protein EF_0663 from Enterococcus faecalis (strain ATCC 700802 / V583).